The sequence spans 439 residues: GTPase Obg (439 aa).

The Obg domain maps to 5 to 164; sequence TDFFDQATIV…LTLELELKML (160 aa). In terms of domain architecture, OBG-type G spans 165–335; it reads ADVGLVGFPN…LLRRVADLLR (171 aa). GTP-binding positions include 171–178, 196–200, 217–220, 287–290, and 316–318; these read GFPNAGKS, FTTLT, DIPG, NKAD, and SAA. Residues Ser178 and Thr198 each coordinate Mg(2+). The region spanning 356 to 433 is the OCT domain; it reads LPEVDENAFT…IGRAELVWDD (78 aa).

The protein belongs to the TRAFAC class OBG-HflX-like GTPase superfamily. OBG GTPase family. Monomer. Mg(2+) serves as cofactor.

Its subcellular location is the cytoplasm. In terms of biological role, an essential GTPase which binds GTP, GDP and possibly (p)ppGpp with moderate affinity, with high nucleotide exchange rates and a fairly low GTP hydrolysis rate. Plays a role in control of the cell cycle, stress response, ribosome biogenesis and in those bacteria that undergo differentiation, in morphogenesis control. The sequence is that of GTPase Obg from Chloroflexus aurantiacus (strain ATCC 29364 / DSM 637 / Y-400-fl).